A 130-amino-acid chain; its full sequence is MAATLQFDLVSPERRLASVQATEVQIPGAAGDMTAMQGHAPTITTLRPGILRAVSAEGTKAYVVTGGFAEISATGVSVLAERAVPLDEMDAKLMDQLVADASAASSVGVDKDTAEKAMSDLQAMKAAAGF.

Belongs to the ATPase epsilon chain family. F-type ATPases have 2 components, CF(1) - the catalytic core - and CF(0) - the membrane proton channel. CF(1) has five subunits: alpha(3), beta(3), gamma(1), delta(1), epsilon(1). CF(0) has three main subunits: a, b and c.

Its subcellular location is the cell inner membrane. Functionally, produces ATP from ADP in the presence of a proton gradient across the membrane. This Fuscovulum blasticum (Rhodobacter blasticus) protein is ATP synthase epsilon chain (atpC).